Reading from the N-terminus, the 731-residue chain is Golgin subfamily A member 5 (731 aa).

Serine 2 is subject to N-acetylserine. Residues 2-698 (SWFVDLAGKA…IFLRRYPIAR (697 aa)) are Cytoplasmic-facing. The residue at position 89 (arginine 89) is a Dimethylated arginine. A disordered region spans residues 93 to 222 (EASHPVENAS…PTPNDDGKSH (130 aa)). Serine 116 is subject to Phosphoserine. Over residues 134–146 (PTGRVEIRKEKGK) the composition is skewed to basic and acidic residues. A compositionally biased stretch (low complexity) spans 147-167 (TPVFQSSQTSSVSSVNPSVTT). Positions 173 to 188 (ENSFGSQTHEAASNSD) are enriched in polar residues. Positions 189–199 (SSHEGQEESSK) are enriched in basic and acidic residues. Residues 216 to 632 (NDDGKSHELS…EQQMNSASGS (417 aa)) are a coiled coil. The helical; Anchor for type IV membrane protein transmembrane segment at 699 to 719 (VFVIIYMALLHLWVMIVLLTY) threads the bilayer. Residues 720-731 (TPEMHHDQPYGK) lie on the Lumenal side of the membrane.

As to quaternary structure, homodimer. Interacts with RAB1A that has been activated by GTP-binding, and possibly also with OCRL1. Interacts with isoform CASP of CUX1. In terms of processing, highly phosphorylated during mitosis. Phosphorylation is barely detectable during interphase. Ubiquitous. Highly expressed in seminiferous tubules and Leydig cells in testis, and detected at much lower levels in the other tissues tested. Expression is very low or not detectable in spermatozoa.

It is found in the golgi apparatus membrane. Involved in maintaining Golgi structure. Stimulates the formation of Golgi stacks and ribbons. Involved in intra-Golgi retrograde transport. This Homo sapiens (Human) protein is Golgin subfamily A member 5 (GOLGA5).